We begin with the raw amino-acid sequence, 49 residues long: L-amino-acid oxidase (49 aa).

Residue 43–44 (MS) participates in FAD binding.

This sequence belongs to the flavin monoamine oxidase family. FIG1 subfamily. Homodimer; non-covalently linked. FAD is required as a cofactor. Post-translationally, N-glycosylated. In terms of tissue distribution, expressed by the venom gland.

It localises to the secreted. It catalyses the reaction an L-alpha-amino acid + O2 + H2O = a 2-oxocarboxylate + H2O2 + NH4(+). The catalysed reaction is L-leucine + O2 + H2O = 4-methyl-2-oxopentanoate + H2O2 + NH4(+). Its function is as follows. Catalyzes an oxidative deamination of predominantly hydrophobic and aromatic L-amino acids, thus producing hydrogen peroxide that may contribute to the diverse toxic effects of this enzyme. Shows activity on L-Leu. Exhibits diverse biological activities, such as hemorrhage, hemolysis, edema, antibacterial and antiparasitic activities, as well as regulation of platelet aggregation. Its effect on platelets is controversial, since it either induces aggregation or inhibits agonist-induced aggregation. These different effects are probably due to different experimental conditions. In addition, this protein induces apoptosis and necrosis and has inhibitory effects on rat kidney function (decrease of blood flow and glomerular filtration). The polypeptide is L-amino-acid oxidase (Bothrops insularis (Golden lancehead)).